A 436-amino-acid polypeptide reads, in one-letter code: F-box/LRR-repeat protein 20 (436 aa).

An F-box domain is found at 22-68 (AVINKKLPKELLLRIFSFLDVVTLCRCAQVSRAWNVLALDGSNWQRI). 13 LRR repeats span residues 74-100 (QRDI…SLRG), 101-126 (CLGV…NLNG), 127-152 (CTKT…DLAS), 153-178 (CTSI…NISW), 179-204 (CDQV…FLKG), 205-230 (CTQL…NLQT), 231-256 (CLQI…CASG), 257-282 (CSNI…EVAR), 283-308 (CSQL…DLEE), 309-334 (CVQI…SLSH), 335-363 (CELI…ELDN), 364-388 (CPLI…ELYD), and 389-414 (CQQI…AYFA). The residue at position 417 (T417) is a Phosphothreonine. Phosphoserine is present on S421.

As to quaternary structure, interacts with SKP1 and CUL1.

It localises to the cytoplasm. Functionally, substrate-recognition component of the SCF (SKP1-CUL1-F-box protein)-type E3 ubiquitin ligase complex. Role in neural transmission. The sequence is that of F-box/LRR-repeat protein 20 (FBXL20) from Bos taurus (Bovine).